Consider the following 227-residue polypeptide: Small ribosomal subunit protein uS3m (227 aa).

Belongs to the universal ribosomal protein uS3 family. As to quaternary structure, component of the mitochondrial small ribosomal subunit (mt-SSU). Mature yeast 74S mitochondrial ribosomes consist of a small (37S) and a large (54S) subunit. The 37S small subunit contains a 15S ribosomal RNA (15S mt-rRNA) and at least 32 different proteins. The 54S large subunit contains a 21S rRNA (21S mt-rRNA) and at least 45 different proteins. uS3m, uS4m and uS5m form the narrow entry site of the mRNA channel.

The protein resides in the mitochondrion. Essential for mitochondrial protein synthesis and required for the maturation of small ribosomal subunits. Its function is as follows. Component of the mitochondrial ribosome (mitoribosome), a dedicated translation machinery responsible for the synthesis of mitochondrial genome-encoded proteins, including at least some of the essential transmembrane subunits of the mitochondrial respiratory chain. The mitoribosomes are attached to the mitochondrial inner membrane and translation products are cotranslationally integrated into the membrane. uS3m is essential for mitochondrial protein synthesis and required for the maturation of small ribosomal subunits. The sequence is that of Small ribosomal subunit protein uS3m (var1) from Schizosaccharomyces pombe (strain 972 / ATCC 24843) (Fission yeast).